The sequence spans 960 residues: Phosphoenolpyruvate carboxylase 3 (960 aa).

Ser-8 bears the Phosphoserine mark. Active-site residues include His-167 and Lys-597.

Belongs to the PEPCase type 1 family. Homotetramer. Requires Mg(2+) as cofactor.

It localises to the cytoplasm. The enzyme catalyses oxaloacetate + phosphate = phosphoenolpyruvate + hydrogencarbonate. It functions in the pathway photosynthesis; C4 acid pathway. With respect to regulation, by light-reversible phosphorylation. Through the carboxylation of phosphoenolpyruvate (PEP) it forms oxaloacetate, a four-carbon dicarboxylic acid source for the tricarboxylic acid cycle. The sequence is that of Phosphoenolpyruvate carboxylase 3 from Sorghum bicolor (Sorghum).